The following is a 371-amino-acid chain: tRNA-specific 2-thiouridylase MnmA (371 aa).

Residues 13 to 20 (GMSGGVDS) and methionine 39 each bind ATP. The interaction with target base in tRNA stretch occupies residues 99-101 (NPD). Cysteine 104 (nucleophile) is an active-site residue. Cysteine 104 and cysteine 200 are joined by a disulfide. Glycine 128 is an ATP binding site. The interaction with tRNA stretch occupies residues 150–152 (KDQ). Residue cysteine 200 is the Cysteine persulfide intermediate of the active site. The segment at 308–309 (RY) is interaction with tRNA.

Belongs to the MnmA/TRMU family.

It is found in the cytoplasm. The enzyme catalyses S-sulfanyl-L-cysteinyl-[protein] + uridine(34) in tRNA + AH2 + ATP = 2-thiouridine(34) in tRNA + L-cysteinyl-[protein] + A + AMP + diphosphate + H(+). In terms of biological role, catalyzes the 2-thiolation of uridine at the wobble position (U34) of tRNA, leading to the formation of s(2)U34. This is tRNA-specific 2-thiouridylase MnmA from Bacillus cereus (strain ATCC 14579 / DSM 31 / CCUG 7414 / JCM 2152 / NBRC 15305 / NCIMB 9373 / NCTC 2599 / NRRL B-3711).